Here is a 74-residue protein sequence, read N- to C-terminus: Exodeoxyribonuclease 7 small subunit (74 aa).

Belongs to the XseB family. As to quaternary structure, heterooligomer composed of large and small subunits.

It localises to the cytoplasm. It carries out the reaction Exonucleolytic cleavage in either 5'- to 3'- or 3'- to 5'-direction to yield nucleoside 5'-phosphates.. In terms of biological role, bidirectionally degrades single-stranded DNA into large acid-insoluble oligonucleotides, which are then degraded further into small acid-soluble oligonucleotides. The sequence is that of Exodeoxyribonuclease 7 small subunit from Synechococcus elongatus (strain ATCC 33912 / PCC 7942 / FACHB-805) (Anacystis nidulans R2).